We begin with the raw amino-acid sequence, 266 residues long: 4-hydroxy-tetrahydrodipicolinate reductase (266 aa).

10–15 (GPRGRM) is an NAD(+) binding site. Position 38 (lysine 38) interacts with NADP(+). Residues 99–101 (GTT) and 125–128 (APNF) each bind NAD(+). The active-site Proton donor/acceptor is the histidine 155. Position 156 (histidine 156) interacts with (S)-2,3,4,5-tetrahydrodipicolinate. The Proton donor role is filled by lysine 159. (S)-2,3,4,5-tetrahydrodipicolinate is bound at residue 165–166 (GT).

The protein belongs to the DapB family.

The protein resides in the cytoplasm. The catalysed reaction is (S)-2,3,4,5-tetrahydrodipicolinate + NAD(+) + H2O = (2S,4S)-4-hydroxy-2,3,4,5-tetrahydrodipicolinate + NADH + H(+). The enzyme catalyses (S)-2,3,4,5-tetrahydrodipicolinate + NADP(+) + H2O = (2S,4S)-4-hydroxy-2,3,4,5-tetrahydrodipicolinate + NADPH + H(+). The protein operates within amino-acid biosynthesis; L-lysine biosynthesis via DAP pathway; (S)-tetrahydrodipicolinate from L-aspartate: step 4/4. Its function is as follows. Catalyzes the conversion of 4-hydroxy-tetrahydrodipicolinate (HTPA) to tetrahydrodipicolinate. In Bacillus thuringiensis subsp. konkukian (strain 97-27), this protein is 4-hydroxy-tetrahydrodipicolinate reductase.